Reading from the N-terminus, the 64-residue chain is Prokaryotic ubiquitin-like protein Pup (64 aa).

Composition is skewed to basic and acidic residues over residues 1–11 (MAQEQTKRTGG) and 25–34 (GQERREKLAE). Positions 1 to 38 (MAQEQTKRTGGGDEDEGSAGPEAAGQERREKLAEDTDD) are disordered. The ARC ATPase binding stretch occupies residues 21–58 (PEAAGQERREKLAEDTDDLLDEIDDVLEENAEDFVRAY). A coiled-coil region spans residues 24–52 (AGQERREKLAEDTDDLLDEIDDVLEENAE). Gln64 bears the Deamidated glutamine mark. Residue Gln64 forms an Isoglutamyl lysine isopeptide (Gln-Lys) (interchain with K-? in acceptor proteins) linkage.

The protein belongs to the prokaryotic ubiquitin-like protein family. Strongly interacts with the proteasome-associated ATPase ARC through a hydrophobic interface; the interacting region of Pup lies in its C-terminal half. There is one Pup binding site per ARC hexamer ring. Post-translationally, is modified by deamidation of its C-terminal glutamine to glutamate by the deamidase Dop, a prerequisite to the subsequent pupylation process.

The protein operates within protein degradation; proteasomal Pup-dependent pathway. Its function is as follows. Protein modifier that is covalently attached to lysine residues of substrate proteins, thereby targeting them for proteasomal degradation. The tagging system is termed pupylation. This is Prokaryotic ubiquitin-like protein Pup from Nocardia farcinica (strain IFM 10152).